The primary structure comprises 620 residues: MSQHKNRVGLLVSAVGVVFGDIGTSPLYALKETFSGHHPIPVNPENIFGVLSLVFWTVMLLVTVKYVIVIMRADNHGEGGSLALLALVTELTRGRRVHYPLMMLGVIAAALFYGDSMITPAISVLSAVEGLEVVTPDLRPYVVPITAVVLTALFAIQSRGTGLVGRLFGPVMCLWFITLAVLGIVNVINAPGVLKAISPTYAFEFVFRHPLMSFYALGSVVLAVTGGEALYTDMGHFGRFPIRLAWFCLVLPALLLNYFGQGALLIHDPSAIQNPFFRMGPEWMVVPLVALATFAAVIASQAVISGAYSVARQAIQLGLLPRMTIVHTSGEEAGQIYVPFTNWTLYLAVMALVVGFQSSSNLAAAYGIAVTSTMMIDTILVSFVMALLWRWNMALVITVVGTLLAVDIAFFSANIIKVAQGGWFPLFIGFISFTVLTTWRRGRALVRKQLKKQAVPLDVVLRALGPNVSRARGTAVFLTAATDGVPPALLHNLKHNQTVHQRVVLTTVTTAETPYVPDSERVHMTDIGDGFHRLIIRYGFMQTPDVPAALVLCKQFGHEFNMMSTSFFLSRETFVPSLNPGMALWRERLFSFMTLNATRATTFFKIPTDRVVELGTQLEI.

A run of 12 helical transmembrane segments spans residues 10-30 (LLVS…LYAL), 50-70 (VLSL…VIVI), 102-122 (MMLG…TPAI), 136-156 (PDLR…LFAI), 168-188 (FGPV…VNVI), 211-231 (LMSF…EALY), 246-266 (WFCL…ALLI), 284-304 (MVVP…QAVI), 336-356 (IYVP…VVGF), 368-388 (IAVT…MALL), 393-413 (MALV…FFSA), and 415-435 (IIKV…SFTV).

It belongs to the HAK/KUP transporter (TC 2.A.72) family.

The protein localises to the cell inner membrane. The enzyme catalyses K(+)(in) + H(+)(in) = K(+)(out) + H(+)(out). In terms of biological role, transport of potassium into the cell. Likely operates as a K(+):H(+) symporter. The sequence is that of Probable potassium transport system protein Kup 2 from Rhodopseudomonas palustris (strain BisB5).